The sequence spans 133 residues: Profilin (133 aa).

Belongs to the profilin family.

In terms of biological role, more likely to influence phosphoinositide metabolism than actin assembly. The sequence is that of Profilin from Cowpox virus (strain GRI-90 / Grishak) (CPV).